Consider the following 573-residue polypeptide: Plasmepsin X (573 aa).

The N-terminal stretch at 1–26 (MKRISPLNTLFYLSLFFSYTFKGLKC) is a signal peptide. Residues 27 to 221 (TRIYKIGTKA…SSIEKNFIAL (195 aa)) constitute a propeptide that is removed on maturation. Disulfide bonds link C39-C51 and C42-C48. Positions 167-211 (KGNKNFTNNENNSDNENNSDNENNSDNENNLDNENNLDNENNSDN) are disordered. Residues 183-203 (NNSDNENNSDNENNLDNENNL) show a composition bias toward acidic residues. The Peptidase A1 domain maps to 248–567 (FVGELLVGTP…ESRPSMVGVA (320 aa)). Residue D266 is part of the active site. A disulfide bridge connects residues C279 and C284. Residue N334 is glycosylated (N-linked (GlcNAc...) asparagine). The cysteines at positions 447 and 448 are disulfide-linked. Residue D457 is part of the active site. A disulfide bridge links C482 with C521.

The protein belongs to the peptidase A1 family. In terms of processing, autocleaved into a p16 prodomain form and two mature forms p44 and p51.

The protein localises to the cytoplasmic vesicle. Its subcellular location is the secretory vesicle. Its activity is regulated as follows. Inhibited by aminohydantoin compounds such as CWHM-117. In terms of biological role, during the asexual blood stage, processes key proteins essential for merozoite egress and invasion of host erythrocytes. Cleaves and activates proteases SUB1 and SUB2. May process members of the EBL and Rh protein families. Also cleaves apical membrane protein AMA1. During the mosquito vector stage and probably in ookinetes, cleaves CelTOS. The polypeptide is Plasmepsin X (Plasmodium falciparum (isolate NF54)).